The chain runs to 136 residues: NADH-ubiquinone oxidoreductase chain 2 (136 aa).

A run of 4 helical transmembrane segments spans residues 12–32 (YFLIQSVASVIFLASILNQSF), 34–54 (FLIPFALLIKIGAAPFHMWLV), 74–94 (IGPLLGLAMLSSVSHLSWLMV), and 99–119 (FLLMLVYYVTYLAILYFAVIL).

Belongs to the complex I subunit 2 family.

It is found in the mitochondrion inner membrane. It carries out the reaction a ubiquinone + NADH + 5 H(+)(in) = a ubiquinol + NAD(+) + 4 H(+)(out). Core subunit of the mitochondrial membrane respiratory chain NADH dehydrogenase (Complex I) that is believed to belong to the minimal assembly required for catalysis. Complex I functions in the transfer of electrons from NADH to the respiratory chain. The immediate electron acceptor for the enzyme is believed to be ubiquinone. The chain is NADH-ubiquinone oxidoreductase chain 2 (ND2) from Artemia salina (Brine shrimp).